Here is a 172-residue protein sequence, read N- to C-terminus: NADH-quinone oxidoreductase subunit B (172 aa).

Positions 46, 47, 111, and 141 each coordinate [4Fe-4S] cluster.

It belongs to the complex I 20 kDa subunit family. In terms of assembly, NDH-1 is composed of 14 different subunits. Subunits NuoB, C, D, E, F, and G constitute the peripheral sector of the complex. [4Fe-4S] cluster is required as a cofactor.

The protein localises to the cell membrane. The catalysed reaction is a quinone + NADH + 5 H(+)(in) = a quinol + NAD(+) + 4 H(+)(out). Functionally, NDH-1 shuttles electrons from NADH, via FMN and iron-sulfur (Fe-S) centers, to quinones in the respiratory chain. The immediate electron acceptor for the enzyme in this species is believed to be a menaquinone. Couples the redox reaction to proton translocation (for every two electrons transferred, four hydrogen ions are translocated across the cytoplasmic membrane), and thus conserves the redox energy in a proton gradient. The chain is NADH-quinone oxidoreductase subunit B from Bacillus anthracis (strain A0248).